A 1275-amino-acid chain; its full sequence is Histone-lysine N-methyltransferase PRDM16 (1275 aa).

Over residues 1–10 the composition is skewed to basic residues; sequence MRSKARARKL. Residues 1-66 are disordered; the sequence is MRSKARARKL…SEDFTPKEGS (66 aa). Positions 82 to 211 constitute an SET domain; sequence PDFELRESSI…PGEELLVHVK (130 aa). Residues 230–255 form a C2H2-type 1; degenerate zinc finger; it reads FRCDECDELFQCRLDLRRHKKYACSS. 5 C2H2-type zinc fingers span residues 282 to 304, 310 to 332, 338 to 361, 367 to 389, and 395 to 417; these read HECKDCERMFPNKYSLEQHMIVH, YKCDQCPKAFNWKSNLIRHQMSH, FECENCVKVFTDPSNLQRHIRSQH, HACPDCGKTFATSSGLKQHKHIH, and FICEVCHKSYTQFSNLCRHKRMH. The C2H2-type 7; atypical zinc finger occupies 424-446; the sequence is IKCKDCGQMFSTTSSLNKHRRFC. Disordered regions lie at residues 592–658 and 789–838; these read VKNR…VPPG and APKV…GVSE. Positions 610-625 are enriched in low complexity; it reads TTTGTDLDTTTGTGSD. 2 stretches are compositionally biased toward basic and acidic residues: residues 631–648 and 821–835; these read DSDRDKGKDKGKPVESKP and REPRKNHVYGERKPG. Residues 680-1038 form an interaction with CTBP1, CTBP2 and ZNF516 region; the sequence is EEQLLTASGA…KHEHEGAPVS (359 aa). The mediates interaction with SKI and regulation of TGF-beta signaling stretch occupies residues 740–1275; that stretch reads PFTDRALAHN…SGAFNPINHL (536 aa). C2H2-type zinc fingers lie at residues 951–973, 979–1002, and 1008–1030; these read YTCRYCGKIFPRSANLTRHLRTH, YRCKYCDRSFSISSNLQRHVRNIH, and FKCHLCNRCFGQQTNLDRHLKKH. Disordered stretches follow at residues 1027 to 1065 and 1084 to 1169; these read LKKHEHEGAPVSQHSGVLTNHLGTSASSPTSESDNHALL and EMNQ…MGFD. Over residues 1038–1058 the composition is skewed to polar residues; sequence SQHSGVLTNHLGTSASSPTSE. Positions 1117–1133 are enriched in acidic residues; the sequence is DVEEEEEEELEEEDDDS.

It belongs to the PRDM16 family. As to quaternary structure, interacts with CEBPA, CEBPB and CEBPD; the interaction is direct. Interacts with PPARG and PPARA; controls brown adipocytes. Interacts with CTBP1 and CTBP2; represses the expression of WAT-specific genes. Interacts with PPARGC1A and PPARGC1B; interaction with PPARGC1A or PPARGC1B activates the transcription of BAT-specific gene. Interacts with HDAC1, SKI and SMAD2; the interaction with SKI promotes the recruitment of SMAD3-HDAC1 complex on the promoter of TGF-beta target genes. Interacts with ZNF516; the interaction is direct and may play a role in the transcription of brown adipose tissue-specific gene. As to expression, enriched in BAT compared to WAT. Detected in heart, lung, kidney and brain. Expressed in nuclei of cardiomyocytes.

It is found in the nucleus. The protein localises to the cytoplasm. It carries out the reaction L-lysyl(9)-[histone H3] + S-adenosyl-L-methionine = N(6)-methyl-L-lysyl(9)-[histone H3] + S-adenosyl-L-homocysteine + H(+). Its function is as follows. Binds DNA and functions as a transcriptional regulator. Displays histone methyltransferase activity and monomethylates 'Lys-9' of histone H3 (H3K9me1) in vitro. Probably catalyzes the monomethylation of free histone H3 in the cytoplasm which is then transported to the nucleus and incorporated into nucleosomes where SUV39H methyltransferases use it as a substrate to catalyze histone H3 'Lys-9' trimethylation. Likely to be one of the primary histone methyltransferases along with MECOM/PRDM3 that direct cytoplasmic H3K9me1 methylation. Functions in the differentiation of brown adipose tissue (BAT) which is specialized in dissipating chemical energy in the form of heat in response to cold or excess feeding while white adipose tissue (WAT) is specialized in the storage of excess energy and the control of systemic metabolism. Together with CEBPB, regulates the differentiation of myoblastic precursors into brown adipose cells. Functions as a repressor of TGF-beta signaling. This is Histone-lysine N-methyltransferase PRDM16 from Mus musculus (Mouse).